The chain runs to 1861 residues: Amylopullulanase (1861 aa).

An N-terminal signal peptide occupies residues 1-35; it reads MNKKLFTNRFISFNMSLLLVLTAVFSSIPLHSVHA. Ca(2+)-binding residues include D248, N250, D288, D343, N401, D403, N406, D407, and D453. Substrate-binding residues include H526 and R626. The active-site Nucleophile is the D628. Catalysis depends on E657, which acts as the Proton donor. Residues 733-734, D793, and R797 each bind substrate; that span reads HD. Fibronectin type-III domains follow at residues 929-1021 and 1158-1252; these read APQA…AYPI and KPTA…VVPI. One can recognise a CBM20 domain in the interval 1246-1354; the sequence is KPDVVPIKVI…INDTVYRWRD (109 aa). The interval 1448–1486 is disordered; the sequence is QENNSGSGTGNNNTSTSGSNSSSTGSGSTGSTSITSNIS. The segment covering 1450 to 1486 has biased composition (low complexity); it reads NNSGSGTGNNNTSTSGSNSSSTGSGSTGSTSITSNIS. 3 consecutive SLH domains span residues 1677–1740, 1741–1799, and 1802–1861; these read EYDK…YSGE, FSDV…KEEN, and ATTF…SGNI.

This sequence belongs to the glycosyl hydrolase 13 family. Requires Ca(2+) as cofactor. Glycosylated.

The protein localises to the secreted. The protein resides in the cell wall. The catalysed reaction is Endohydrolysis of (1-&gt;4)-alpha-D-glucosidic linkages in polysaccharides containing three or more (1-&gt;4)-alpha-linked D-glucose units.. The enzyme catalyses Hydrolysis of (1-&gt;6)-alpha-D-glucosidic linkages in pullulan, amylopectin and glycogen, and in the alpha- and beta-limit dextrins of amylopectin and glycogen.. The protein is Amylopullulanase (amyB) of Thermoanaerobacterium thermosulfurigenes (Clostridium thermosulfurogenes).